Consider the following 268-residue polypeptide: Ubiquinone biosynthesis protein COQ4 homolog, mitochondrial (268 aa).

Residues His-171, Asp-172, His-175, and Glu-187 each contribute to the Zn(2+) site.

Belongs to the COQ4 family. In terms of assembly, component of a multi-subunit COQ enzyme complex. It depends on Zn(2+) as a cofactor.

It localises to the mitochondrion inner membrane. It carries out the reaction a 4-hydroxy-3-methoxy-5-(all-trans-polyprenyl)benzoate + H(+) = a 2-methoxy-6-(all-trans-polyprenyl)phenol + CO2. It participates in cofactor biosynthesis; ubiquinone biosynthesis. In terms of biological role, lyase that catalyzes the C1-decarboxylation of 4-hydroxy-3-methoxy-5-(all-trans-polyprenyl)benzoic acid into 2-methoxy-6-(all-trans-polyprenyl)phenol during ubiquinone biosynthesis. The polypeptide is Ubiquinone biosynthesis protein COQ4 homolog, mitochondrial (Drosophila yakuba (Fruit fly)).